An 85-amino-acid chain; its full sequence is Small ribosomal subunit protein uS17 (85 aa).

Belongs to the universal ribosomal protein uS17 family. In terms of assembly, part of the 30S ribosomal subunit.

Its function is as follows. One of the primary rRNA binding proteins, it binds specifically to the 5'-end of 16S ribosomal RNA. The sequence is that of Small ribosomal subunit protein uS17 from Rhodospirillum centenum (strain ATCC 51521 / SW).